The chain runs to 124 residues: Pal-related lipoprotein (124 aa).

Residues 1–18 form the signal peptide; the sequence is MRYRAVFPMLIIVFALSG. The N-palmitoyl cysteine moiety is linked to residue C19. C19 carries S-diacylglycerol cysteine lipidation.

The protein localises to the cell membrane. The chain is Pal-related lipoprotein (slp) from Bacillus subtilis (strain 168).